A 102-amino-acid chain; its full sequence is NADH-quinone oxidoreductase subunit K (102 aa).

Transmembrane regions (helical) follow at residues 6–26 (LIAM…GVLA), 30–50 (IMFQ…GFVA), and 63–83 (MFIL…ALFL).

This sequence belongs to the complex I subunit 4L family. NDH-1 is composed of 14 different subunits. Subunits NuoA, H, J, K, L, M, N constitute the membrane sector of the complex.

It is found in the cell inner membrane. The catalysed reaction is a quinone + NADH + 5 H(+)(in) = a quinol + NAD(+) + 4 H(+)(out). Functionally, NDH-1 shuttles electrons from NADH, via FMN and iron-sulfur (Fe-S) centers, to quinones in the respiratory chain. The immediate electron acceptor for the enzyme in this species is believed to be ubiquinone. Couples the redox reaction to proton translocation (for every two electrons transferred, four hydrogen ions are translocated across the cytoplasmic membrane), and thus conserves the redox energy in a proton gradient. This chain is NADH-quinone oxidoreductase subunit K, found in Rhodopseudomonas palustris (strain BisB5).